A 393-amino-acid polypeptide reads, in one-letter code: NAD(P)H-quinone oxidoreductase subunit H, chloroplastic (393 aa).

This sequence belongs to the complex I 49 kDa subunit family. In terms of assembly, NDH is composed of at least 16 different subunits, 5 of which are encoded in the nucleus.

It localises to the plastid. The protein resides in the chloroplast thylakoid membrane. The enzyme catalyses a plastoquinone + NADH + (n+1) H(+)(in) = a plastoquinol + NAD(+) + n H(+)(out). The catalysed reaction is a plastoquinone + NADPH + (n+1) H(+)(in) = a plastoquinol + NADP(+) + n H(+)(out). Its function is as follows. NDH shuttles electrons from NAD(P)H:plastoquinone, via FMN and iron-sulfur (Fe-S) centers, to quinones in the photosynthetic chain and possibly in a chloroplast respiratory chain. The immediate electron acceptor for the enzyme in this species is believed to be plastoquinone. Couples the redox reaction to proton translocation, and thus conserves the redox energy in a proton gradient. In Angiopteris evecta (Mule's foot fern), this protein is NAD(P)H-quinone oxidoreductase subunit H, chloroplastic.